Consider the following 201-residue polypeptide: Glycine-rich protein 23 (201 aa).

A signal peptide spans 1-24 (MGLISGKVCVFIFVFALVAEFSFG). Repeat copies occupy residues 62–67 (GLGGGG), 68–73 (GLGGGG), 74–79 (GLGGGG), 80–85 (GLGGGG), 86–91 (GLGGGG), 92–97 (GLGGGG), 98–103 (GLGGGS), 104–109 (GLGGGG), 110–115 (GLGGGS), 116–121 (GLGGGG), 122–129 (GLGGGGGG), 130–135 (GLGGGG), 136–143 (GLGGGAGG), 144–151 (GYGGGAGG), 152–157 (GLGGGG), 158–163 (GIGGGG), 164–169 (GFGGGG), 170–175 (GGGFGG), 176–182 (GAGGGFG), 184–189 (GIGGGG), and 190–194 (GLGGG). A 21 X 6 AA approximate tandem repeats of G-L-G-G-G-G, Gly-rich region spans residues 62–194 (GLGGGGGLGG…IGGGGGLGGG (133 aa)).

The polypeptide is Glycine-rich protein 23 (Arabidopsis thaliana (Mouse-ear cress)).